A 244-amino-acid chain; its full sequence is Ubiquinone/menaquinone biosynthesis C-methyltransferase UbiE (244 aa).

S-adenosyl-L-methionine is bound by residues T70, D91, and 117–118 (DA).

This sequence belongs to the class I-like SAM-binding methyltransferase superfamily. MenG/UbiE family.

The catalysed reaction is a 2-demethylmenaquinol + S-adenosyl-L-methionine = a menaquinol + S-adenosyl-L-homocysteine + H(+). It catalyses the reaction a 2-methoxy-6-(all-trans-polyprenyl)benzene-1,4-diol + S-adenosyl-L-methionine = a 5-methoxy-2-methyl-3-(all-trans-polyprenyl)benzene-1,4-diol + S-adenosyl-L-homocysteine + H(+). It functions in the pathway quinol/quinone metabolism; menaquinone biosynthesis; menaquinol from 1,4-dihydroxy-2-naphthoate: step 2/2. It participates in cofactor biosynthesis; ubiquinone biosynthesis. In terms of biological role, methyltransferase required for the conversion of demethylmenaquinol (DMKH2) to menaquinol (MKH2) and the conversion of 2-polyprenyl-6-methoxy-1,4-benzoquinol (DDMQH2) to 2-polyprenyl-3-methyl-6-methoxy-1,4-benzoquinol (DMQH2). This Laribacter hongkongensis (strain HLHK9) protein is Ubiquinone/menaquinone biosynthesis C-methyltransferase UbiE.